Consider the following 605-residue polypeptide: MDATRTFFGLPNVHNVPLCLTSNLSLFPQRLLQKHTLPLKPAKKHHLVCVRSTKSSDDLEGSRPSTYFSPSLWGDHFLSVSLDRGEFDELEREIETMKPLVKDMLMSSQSSDKEKIRLIHLLVSLGSSYHFDKEIQDILKHSFTKLDDIIVGEDDLETISIMFEVFRLYGHKMSCDAFDRFRGEDGRFKESLAKDVRGMLQLFEVAHLGTPSEDIMDEASSFAQNHLDSWIGGNVSGATPHLLKHIQNSLYIPRYCNIEVLVAREYISYYEQEEGHNKILLKFAKLNFNFCQFHYIQELKTLTKWWKDLDLASKLPYIRDRLVESHLGGLGPYFEPHYSLGRIIVAKIIMTMVVVDDTYDAHATVPEVAVLTECLQRLNIGADDKLPDYLRTVLESVFEVMGEIEQEMRPKGRSYGVKQVLERFKNVAKADKQLTEWARTGDVPSFDEYMKVGLVTAGMDGYAGYCFIGMEDVSEKEAFEWLSSNPLIIQALNVMFRLANDVGTYETEINRGEVANGLNCYMKQYGVTKEEASQELRKIYSNNKKVVMEEFMNSHDHVPRQVLLRCLNFARLFDVMYTEGDGYSEPKGKIEHFMTSLYVHPIPLS.

Mg(2+) is bound by residues aspartate 356, aspartate 360, asparagine 500, threonine 504, and glutamate 508. The DDXXD motif signature appears at aspartate 356–aspartate 360.

It belongs to the terpene synthase family. Tpsa subfamily. It depends on Mg(2+) as a cofactor. Mn(2+) is required as a cofactor. Predominantly expressed in flowers and siliques but also in roots and leaves.

The protein localises to the cytoplasm. It functions in the pathway secondary metabolite biosynthesis; terpenoid biosynthesis. The protein is Terpenoid synthase 18 (TPS18) of Arabidopsis thaliana (Mouse-ear cress).